Reading from the N-terminus, the 883-residue chain is Lysine-specific demethylase JMJ29 (883 aa).

2 disordered regions span residues 30–62 (KPFMSKGSSPSSSSDSRKRKLSRAEDSDDSAVK) and 161–204 (RTHS…SRKQ). A compositionally biased stretch (low complexity) spans 34–43 (SKGSSPSSSS). 2 stretches are compositionally biased toward polar residues: residues 161 to 172 (RTHSLSANSPEN) and 184 to 204 (SPASNVSDSIQKNDCTSSRKQ). Residues Cys-209, Cys-212, Cys-223, Cys-226, Cys-232, Cys-235, Cys-252, Cys-255, Cys-338, Cys-341, Cys-363, and His-381 each contribute to the Zn(2+) site. An RING-type; degenerate zinc finger spans residues 209–256 (CHQCLKGERITLLICSECEKTMFCLQCIRKWYPNLSEDDVVEKCPLCR). A B box-type; atypical zinc finger spans residues 333–392 (DERVYCDHCATSIVDLHRSCPKCSYELCLKCCQEIREGSLSERPEMKFHYVDRGHRYMHG). Residues 632 to 863 (PRTGILNIAT…ECLRLTEEFR (232 aa)) enclose the JmjC domain. Residues His-676 and Asp-678 each coordinate Fe cation. A disordered region spans residues 713–743 (NKVDKQSTEDCNEKEEEEEEELNMPEISSNE). Over residues 722 to 735 (DCNEKEEEEEEELN) the composition is skewed to acidic residues. A Nuclear localization signal motif is present at residues 755–762 (FRREDVPK). Residue His-831 coordinates Fe cation.

The protein belongs to the JARID1 histone demethylase family. Fe(2+) is required as a cofactor. As to expression, expressed in inflorescences, roots, siliques, leaves and stems.

Its subcellular location is the nucleus. Its function is as follows. May function as histone H3 lysine demethylase and be involved in regulation of gene expression. This chain is Lysine-specific demethylase JMJ29, found in Arabidopsis thaliana (Mouse-ear cress).